Here is a 72-residue protein sequence, read N- to C-terminus: Male-specific sperm protein Mst84Dd (72 aa).

This sequence belongs to the MST(3)CGP family. As to expression, testis.

The chain is Male-specific sperm protein Mst84Dd (Mst84Dd) from Drosophila melanogaster (Fruit fly).